We begin with the raw amino-acid sequence, 312 residues long: Methionyl-tRNA formyltransferase (312 aa).

109–112 (SLLP) provides a ligand contact to (6S)-5,6,7,8-tetrahydrofolate.

It belongs to the Fmt family.

The catalysed reaction is L-methionyl-tRNA(fMet) + (6R)-10-formyltetrahydrofolate = N-formyl-L-methionyl-tRNA(fMet) + (6S)-5,6,7,8-tetrahydrofolate + H(+). Its function is as follows. Attaches a formyl group to the free amino group of methionyl-tRNA(fMet). The formyl group appears to play a dual role in the initiator identity of N-formylmethionyl-tRNA by promoting its recognition by IF2 and preventing the misappropriation of this tRNA by the elongation apparatus. In Listeria monocytogenes serotype 4b (strain CLIP80459), this protein is Methionyl-tRNA formyltransferase.